The primary structure comprises 146 residues: Negative cofactor 2 complex subunit beta (146 aa).

Positions 124-146 (FRQSRSRLHHNSVSDPVKSEDSS) are disordered. Residues Ser135, Ser137, and Ser142 each carry the phosphoserine modification.

In terms of assembly, component of the NC2 (negative cofactor 2) complex composed of BUR6 and NCB2. The NC2 complex associates with SPT15/TBP. Interacts with SPT15/TBP.

It is found in the nucleus. Its function is as follows. Component of the NC2 complex which represses RNA polymerase II transcription through binding to SPT15/TBP and thereby inhibiting the assembly of the preinitiation complex. The NC2 complex may also mediate transcriptional activation from TATA-driven promoters through association with SPT15/TBP. This is Negative cofactor 2 complex subunit beta (NCB2) from Saccharomyces cerevisiae (strain ATCC 204508 / S288c) (Baker's yeast).